The chain runs to 25 residues: Pregnancy-associated glycoprotein 59g (25 aa).

N-linked (GlcNAc...) asparagine glycosylation occurs at asparagine 4.

Belongs to the peptidase A1 family. As to expression, highly expressed in the placenta between day 60 and day 100 of gestation.

Its subcellular location is the secreted. The protein resides in the extracellular space. This Ovis aries (Sheep) protein is Pregnancy-associated glycoprotein 59g.